Consider the following 330-residue polypeptide: uncharacterized protein (330 aa).

The active site involves H257.

The protein belongs to the IUNH family.

This is an uncharacterized protein from Schizosaccharomyces pombe (strain 972 / ATCC 24843) (Fission yeast).